The following is a 365-amino-acid chain: Geranylgeranyl pyrophosphate synthase (365 aa).

Positions 1–11 (MKPLPSTNGKV) are enriched in polar residues. A disordered region spans residues 1 to 36 (MKPLPSTNGKVNGNGKHHDSSLSSTSSTSSSSSSDT). The span at 21-34 (SLSSTSSTSSSSSS) shows a compositional bias: low complexity. Isopentenyl diphosphate is bound by residues lysine 78, arginine 81, and histidine 110. Aspartate 117 and aspartate 121 together coordinate Mg(2+). Arginine 126 provides a ligand contact to dimethylallyl diphosphate. Residue arginine 127 participates in isopentenyl diphosphate binding. Dimethylallyl diphosphate is bound by residues lysine 211, threonine 212, and glutamine 247. Position 250 (aspartate 250) interacts with Mg(2+). Dimethylallyl diphosphate-binding residues include asparagine 254, lysine 263, and lysine 273.

It belongs to the FPP/GGPP synthase family. The cofactor is Mg(2+).

The catalysed reaction is isopentenyl diphosphate + dimethylallyl diphosphate = (2E)-geranyl diphosphate + diphosphate. It catalyses the reaction isopentenyl diphosphate + (2E)-geranyl diphosphate = (2E,6E)-farnesyl diphosphate + diphosphate. It carries out the reaction isopentenyl diphosphate + (2E,6E)-farnesyl diphosphate = (2E,6E,10E)-geranylgeranyl diphosphate + diphosphate. In terms of biological role, geranylgeranyl pyrophosphate synthase that catalyzes the trans-addition of the three molecules of IPP onto DMAPP to form geranylgeranyl pyrophosphate. Does not show any monoterpene nor sesquiterpene synthase activity. This chain is Geranylgeranyl pyrophosphate synthase, found in Melampsora lini (Rust fungus).